A 479-amino-acid chain; its full sequence is Aldehyde dehydrogenase (479 aa).

Residue 190–195 (GSSKVG) participates in NAD(+) binding. Glutamate 212 (proton acceptor) is an active-site residue. Cysteine 247 (nucleophile) is an active-site residue.

Belongs to the aldehyde dehydrogenase family.

The protein localises to the plastid. It is found in the amyloplast. The protein resides in the chloroplast. It catalyses the reaction an aldehyde + NAD(+) + H2O = a carboxylate + NADH + 2 H(+). Its function is as follows. Oxidizes nonanal, propionaldehyde and acetaldehyde in vitro, in the following decreasing order of reactivity: nonanal, propionaldehyde, acetaldehyde. In Craterostigma plantagineum (Blue gem), this protein is Aldehyde dehydrogenase (ALDH).